The following is a 658-amino-acid chain: Protein teflon (658 aa).

Residues 33 to 56 (LYCHFCRDLFTQLPEFLRHLQGAH) form a C2H2-type 1 zinc finger. Disordered regions lie at residues 78–127 (EQDD…SEQK) and 151–175 (HINN…SESN). The segment covering 100 to 111 (IPAKSEDSRAID) has biased composition (basic and acidic residues). Residues 118–127 (DNSPVKSEQK) show a composition bias toward polar residues. The segment at 608 to 630 (YFCKCCDDIFTLNEDYTRHLVSQ) adopts a C2H2-type 2; degenerate zinc-finger fold. A C2H2-type 3 zinc finger spans residues 634 to 657 (YQCTKCIKAFKYRGHFEKHLQNVH).

Belongs to the Teflon family.

It is found in the nucleus. The protein resides in the chromosome. Specifically required in males for proper segregation of autosomal bivalents at meiosis I. Expression is required in the male germ line prior to spermatocyte stage S4. May have a role as a bridging molecule maintaining adhesion to hold autosome bivalents together via heterochromatic connections. The chain is Protein teflon from Drosophila erecta (Fruit fly).